The following is a 105-amino-acid chain: D-galactoside-specific lectin (105 aa).

An SUEL-type lectin domain is found at 13-103; the sequence is VCEDSSLTIS…KYLAVTYICS (91 aa).

In terms of assembly, homodimer; disulfide-linked.

The protein resides in the cytoplasm. In terms of biological role, this protein binds D-galactoside. May have an important role in the activation of eggs (triggered by fertilization), or in their subsequent differentiation. The dimeric form is essential for hemagglutination activity. This chain is D-galactoside-specific lectin, found in Heliocidaris crassispina (Sea urchin).